A 208-amino-acid chain; its full sequence is Germin-like protein subfamily 3 member 1 (208 aa).

An N-terminal signal peptide occupies residues 1 to 18 (MLRTIFLLSLLFALSNAS). Residues cysteine 23 and cysteine 38 are joined by a disulfide bond. In terms of domain architecture, Cupin type-1 spans 52–198 (SGLGTPGNTT…TTFLDATTVK (147 aa)). The N-linked (GlcNAc...) asparagine glycan is linked to asparagine 59. Mn(2+) contacts are provided by histidine 100, histidine 102, glutamate 107, and histidine 146.

It belongs to the germin family. May not form oligomer. Expressed during germination, and also in green shoots, etiolated seedlings and whole seedlings.

It is found in the secreted. It localises to the extracellular space. The protein resides in the apoplast. Functionally, may play a role in plant defense. Probably has no oxalate oxidase activity even if the active site is conserved. This is Germin-like protein subfamily 3 member 1 (GLP1) from Arabidopsis thaliana (Mouse-ear cress).